The chain runs to 436 residues: GTPase Der (436 aa).

2 EngA-type G domains span residues 4 to 167 and 176 to 351; these read PIVA…DEET and IRLS…ENHK. GTP-binding positions include 10–17, 57–61, 119–122, 182–189, 229–233, and 294–297; these read GRPNVGKS, DTGGI, NKVD, DTAGM, and NKWD. A KH-like domain is found at 352 to 436; sequence KRVQSSTLNE…PIHIIPRRRN (85 aa).

It belongs to the TRAFAC class TrmE-Era-EngA-EngB-Septin-like GTPase superfamily. EngA (Der) GTPase family. Associates with the 50S ribosomal subunit.

In terms of biological role, GTPase that plays an essential role in the late steps of ribosome biogenesis. This is GTPase Der from Staphylococcus haemolyticus (strain JCSC1435).